Here is a 121-residue protein sequence, read N- to C-terminus: Flagellar hook-basal body complex protein FliE (121 aa).

This sequence belongs to the FliE family.

It is found in the bacterial flagellum basal body. This chain is Flagellar hook-basal body complex protein FliE, found in Treponema denticola (strain ATCC 35405 / DSM 14222 / CIP 103919 / JCM 8153 / KCTC 15104).